Here is an 858-residue protein sequence, read N- to C-terminus: Zinc finger protein ZXDC (858 aa).

3 disordered regions span residues 1–73, 85–108, and 142–175; these read MDLP…GGDS, DTHG…PAAA, and AAPS…GSPA. The segment covering 59–68 has biased composition (pro residues); that stretch reads APGPSPPPPE. Residues 142 to 152 show a composition bias toward low complexity; it reads AAPSLHPATTP. C2H2-type zinc fingers lie at residues 176 to 200, 209 to 233, 239 to 263, 269 to 291, 298 to 322, 329 to 353, 359 to 383, 389 to 413, 419 to 443, and 452 to 477; these read YRCP…LLTH, FKCP…LQSH, FSCP…MKGH, FKCE…QRSH, YKCD…NRAH, FSCS…LRSH, FICD…KRKH, FTCP…SITH, FECP…SKKH, and SRCP…VRQH. A compositionally biased stretch (polar residues) spans 624–634; the sequence is DSPALTPSNNL. A disordered region spans residues 624–652; that stretch reads DSPALTPSNNLTAPGTTPTSSDTTQETGS. A compositionally biased stretch (low complexity) spans 635–651; the sequence is TAPGTTPTSSDTTQETG. K661 participates in a covalent cross-link: Glycyl lysine isopeptide (Lys-Gly) (interchain with G-Cter in SUMO). 2 disordered regions span residues 671–714 and 727–751; these read DVVQ…LESG and VKKK…KVKG. Polar residues predominate over residues 681-692; the sequence is GPSQSVLSSSTE.

This sequence belongs to the ZXD family. In terms of assembly, self-associates. Interacts with ZXDB and CIITA. In terms of processing, sumoylated at Lys-661 with SUMO1, SUMO2 and SUMO3; sumoylation enhances the activity of the transcriptional activation domain.

It is found in the nucleus. Its function is as follows. Cooperates with CIITA to promote transcription of MHC class I and MHC class II genes. This chain is Zinc finger protein ZXDC (Zxdc), found in Mus musculus (Mouse).